The primary structure comprises 217 residues: Adenylate kinase (217 aa).

10–15 (GAGKGT) provides a ligand contact to ATP. The interval 30 to 59 (STGDLFRANISQQTELGKLAKSYMNAGNLV) is NMP. Residues T31, R36, 57-59 (NLV), 85-88 (GFPR), and Q92 each bind AMP. The interval 126-164 (GRRVCRNEPKHVFHVTYTPPKKEGVCDVCGGELYQRDDD) is LID. Residues R127 and 137–138 (VF) contribute to the ATP site. 2 residues coordinate AMP: R161 and R172. G200 provides a ligand contact to ATP.

Belongs to the adenylate kinase family. Monomer.

It localises to the cytoplasm. The catalysed reaction is AMP + ATP = 2 ADP. It functions in the pathway purine metabolism; AMP biosynthesis via salvage pathway; AMP from ADP: step 1/1. In terms of biological role, catalyzes the reversible transfer of the terminal phosphate group between ATP and AMP. Plays an important role in cellular energy homeostasis and in adenine nucleotide metabolism. The chain is Adenylate kinase from Streptomyces coelicolor (strain ATCC BAA-471 / A3(2) / M145).